The following is a 201-amino-acid chain: Fimbrial protein FimX (201 aa).

The N-terminal stretch at 1–21 (MQAKTFLLGAALAGVALAAHA) is a signal peptide. Cys-37 and Cys-79 are joined by a disulfide.

Belongs to the fimbrial protein family.

The protein resides in the fimbrium. Its function is as follows. Bordetella pertussis is the causative agent of whooping cough. An essential step in the disease process is the attachment of the bacteria to the ciliated epithelium of the respiratory tract, enabling the organism to resist normal host-clearance mechanisms. It is unclear which bacterial cell surface component are responsible for adherence but the fimbriae of B.pertussis are prime candidates for being involved in this process. The chain is Fimbrial protein FimX (fimX) from Bordetella pertussis (strain Tohama I / ATCC BAA-589 / NCTC 13251).